The chain runs to 377 residues: MINMKFFNRVEEIKEILSILEEEPNLIYFIYGPINSGKTALINEIINNRLDKNKYVVFYIDLREIFISKYDEFEAKLRATKTFGFRLIIEVLFEEYEDDKKPIEIIRSLIKDAPSLCGIPTPKNTLEEILKKKTTKNVFKYITNILMDIKREGKQPIIIIDELQKIGDMKINGFLIYELFNYFVSLTKHKHLCHVFCLSSDSLFIERVYNEAMLKERVDYILVDDFDKETALKFIDFLSEEILNKKLSDEDKELIYSYVGGKPILIINVIGKLKHKNLKDVLNILLMDEISKLKDFLSNLDYIKPKVNIEEEIIEIRKEDIINALKLFKGKYEIEVDKIPKAVYVYLVKKNILFLYPQRGTLKPQSFLVWNAIKRVL.

An ATP-binding site is contributed by 32 to 39 (GPINSGKT).

It belongs to the archaeal ATPase family.

This is an uncharacterized protein from Methanocaldococcus jannaschii (strain ATCC 43067 / DSM 2661 / JAL-1 / JCM 10045 / NBRC 100440) (Methanococcus jannaschii).